The primary structure comprises 176 residues: Small ribosomal subunit protein uS4 (176 aa).

Positions 104 to 166 (RRLQTIVYKK…PTSPFKQNPP (63 aa)) constitute an S4 RNA-binding domain.

The protein belongs to the universal ribosomal protein uS4 family. In terms of assembly, part of the 30S ribosomal subunit. Contacts protein S5. The interaction surface between S4 and S5 is involved in control of translational fidelity.

Its function is as follows. One of the primary rRNA binding proteins, it binds directly to 16S rRNA where it nucleates assembly of the body of the 30S subunit. With S5 and S12 plays an important role in translational accuracy. The protein is Small ribosomal subunit protein uS4 (rps4) of Sulfolobus acidocaldarius (strain ATCC 33909 / DSM 639 / JCM 8929 / NBRC 15157 / NCIMB 11770).